A 310-amino-acid polypeptide reads, in one-letter code: Upstream stimulatory factor 1 (310 aa).

Over residues 1 to 17 (MKGQQKTAETEEGTVQI) the composition is skewed to polar residues. Disordered regions lie at residues 1–26 (MKGQ…ATGE) and 171–209 (QGGS…EVER). Basic and acidic residues predominate over residues 194-209 (TTRDEKRRAQHNEVER). The region spanning 199–254 (KRRAQHNEVERRRRDKINNWIVQLSKIIPDCSMESTKSGQSKGGILSKACDYIQEL) is the bHLH domain. Positions 271–292 (LQLDNDVLRQQVEDLKNKNLLL) are leucine-zipper. Lys-306 is covalently cross-linked (Glycyl lysine isopeptide (Lys-Gly) (interchain with G-Cter in SUMO2)).

In terms of assembly, efficient DNA binding requires dimerization with another bHLH protein. Binds DNA as a homodimer or a heterodimer (USF1/USF2).

It is found in the nucleus. Its function is as follows. Transcription factor that binds to a symmetrical DNA sequence (E-boxes) (5'-CACGTG-3') that is found in a variety of viral and cellular promoters. Regulates the expression of the surfactant protein-A (SP-A) gene. This Oryctolagus cuniculus (Rabbit) protein is Upstream stimulatory factor 1 (USF1).